A 311-amino-acid polypeptide reads, in one-letter code: Pyrimidine-specific ribonucleoside hydrolase RihA (311 aa).

Histidine 240 is a catalytic residue.

It belongs to the IUNH family. RihA subfamily.

Its function is as follows. Hydrolyzes with equal efficiency cytidine or uridine to ribose and cytosine or uracil, respectively. In Escherichia coli (strain ATCC 8739 / DSM 1576 / NBRC 3972 / NCIMB 8545 / WDCM 00012 / Crooks), this protein is Pyrimidine-specific ribonucleoside hydrolase RihA.